A 179-amino-acid chain; its full sequence is Large ribosomal subunit protein uL5 (179 aa).

It belongs to the universal ribosomal protein uL5 family. Part of the 50S ribosomal subunit; part of the 5S rRNA/L5/L18/L25 subcomplex. Contacts the 5S rRNA and the P site tRNA. Forms a bridge to the 30S subunit in the 70S ribosome.

Functionally, this is one of the proteins that bind and probably mediate the attachment of the 5S RNA into the large ribosomal subunit, where it forms part of the central protuberance. In the 70S ribosome it contacts protein S13 of the 30S subunit (bridge B1b), connecting the 2 subunits; this bridge is implicated in subunit movement. Contacts the P site tRNA; the 5S rRNA and some of its associated proteins might help stabilize positioning of ribosome-bound tRNAs. This chain is Large ribosomal subunit protein uL5, found in Bacillus anthracis (strain A0248).